An 897-amino-acid chain; its full sequence is Alanine--tRNA ligase (897 aa).

Positions 591, 595, 695, and 699 each coordinate Zn(2+).

It belongs to the class-II aminoacyl-tRNA synthetase family. Zn(2+) is required as a cofactor.

The protein localises to the cytoplasm. The enzyme catalyses tRNA(Ala) + L-alanine + ATP = L-alanyl-tRNA(Ala) + AMP + diphosphate. Functionally, catalyzes the attachment of alanine to tRNA(Ala) in a two-step reaction: alanine is first activated by ATP to form Ala-AMP and then transferred to the acceptor end of tRNA(Ala). Also edits incorrectly charged Ser-tRNA(Ala) and Gly-tRNA(Ala) via its editing domain. The chain is Alanine--tRNA ligase from Methanobrevibacter smithii (strain ATCC 35061 / DSM 861 / OCM 144 / PS).